The sequence spans 182 residues: Endoribonuclease YbeY (182 aa).

Positions 115, 119, and 125 each coordinate Zn(2+).

Belongs to the endoribonuclease YbeY family. The cofactor is Zn(2+).

The protein resides in the cytoplasm. Single strand-specific metallo-endoribonuclease involved in late-stage 70S ribosome quality control and in maturation of the 3' terminus of the 16S rRNA. The protein is Endoribonuclease YbeY of Bifidobacterium longum subsp. infantis (strain ATCC 15697 / DSM 20088 / JCM 1222 / NCTC 11817 / S12).